Consider the following 397-residue polypeptide: Proteasome-activating nucleotidase (397 aa).

A coiled-coil region spans residues 15-58 (DYVTFLKRRIRQLELQVRTLEADKERLERELSRLRMEMSRLRQP). Residues 182 to 187 (GCGKTL) and His-321 contribute to the ATP site. Positions 395–397 (MYG) are docks into pockets in the proteasome alpha-ring to cause gate opening.

Belongs to the AAA ATPase family. Homohexamer. The hexameric complex has a two-ring architecture resembling a top hat that caps the 20S proteasome core at one or both ends. Upon ATP-binding, the C-terminus of PAN interacts with the alpha-rings of the proteasome core by binding to the intersubunit pockets.

It localises to the cytoplasm. In terms of biological role, ATPase which is responsible for recognizing, binding, unfolding and translocation of substrate proteins into the archaeal 20S proteasome core particle. Is essential for opening the gate of the 20S proteasome via an interaction with its C-terminus, thereby allowing substrate entry and access to the site of proteolysis. Thus, the C-termini of the proteasomal ATPase function like a 'key in a lock' to induce gate opening and therefore regulate proteolysis. Unfolding activity requires energy from ATP hydrolysis, whereas ATP binding alone promotes ATPase-20S proteasome association which triggers gate opening, and supports translocation of unfolded substrates. The chain is Proteasome-activating nucleotidase from Thermococcus kodakarensis (strain ATCC BAA-918 / JCM 12380 / KOD1) (Pyrococcus kodakaraensis (strain KOD1)).